Reading from the N-terminus, the 286-residue chain is Beta-lactamase SHV-34 (286 aa).

The first 21 residues, 1-21 (MRYFRLCIISLLATLPLAVHA), serve as a signal peptide directing secretion. S66 serves as the catalytic Acyl-ester intermediate. The cysteines at positions 73 and 119 are disulfide-linked. E164 functions as the Proton acceptor in the catalytic mechanism. A substrate-binding site is contributed by 230 to 232 (KTG).

Belongs to the class-A beta-lactamase family.

The catalysed reaction is a beta-lactam + H2O = a substituted beta-amino acid. Its function is as follows. Hydrolyzes ceftazidime and cefotaxime. The sequence is that of Beta-lactamase SHV-34 (bla) from Escherichia coli.